The sequence spans 124 residues: Protein YebF (124 aa).

The N-terminal stretch at 1–27 (MKTCHIINRVGLSGVALLLTVSFTVSA) is a signal peptide. One can recognise a YebF/Cmi domain in the interval 36–123 (KFISCDNLTK…QQNTISYSEL (88 aa)). A disulfide bridge connects residues cysteine 40 and cysteine 113.

It belongs to the YebF family.

The protein localises to the secreted. This is Protein YebF from Photorhabdus laumondii subsp. laumondii (strain DSM 15139 / CIP 105565 / TT01) (Photorhabdus luminescens subsp. laumondii).